We begin with the raw amino-acid sequence, 353 residues long: Photosystem II protein D1 (353 aa).

Thr-2 bears the N-acetylthreonine mark. Thr-2 carries the post-translational modification Phosphothreonine. The next 3 helical transmembrane spans lie at 29-46 (YIGWFGVLMIPTLLTATS), 118-133 (HFLLGVACYMGREWEL), and 142-156 (WIAVAYSAPVAAATA). His-118 serves as a coordination point for chlorophyll a. A pheophytin a-binding site is contributed by Tyr-126. Residues Asp-170 and Glu-189 each contribute to the [CaMn4O5] cluster site. A helical transmembrane segment spans residues 197 to 218 (FHMLGVAGVFGGSLFSAMHGSL). His-198 contacts chlorophyll a. Residues His-215 and 264 to 265 (SF) each bind a quinone. Residue His-215 coordinates Fe cation. His-272 lines the Fe cation pocket. The chain crosses the membrane as a helical span at residues 274 to 288 (FLTAWPVVGIWFTAL). [CaMn4O5] cluster contacts are provided by His-332, Glu-333, Asp-342, and Ala-344. The propeptide occupies 345-353 (VVEAPSTNG).

Belongs to the reaction center PufL/M/PsbA/D family. As to quaternary structure, PSII is composed of 1 copy each of membrane proteins PsbA, PsbB, PsbC, PsbD, PsbE, PsbF, PsbH, PsbI, PsbJ, PsbK, PsbL, PsbM, PsbT, PsbX, PsbY, PsbZ, Psb30/Ycf12, at least 3 peripheral proteins of the oxygen-evolving complex and a large number of cofactors. It forms dimeric complexes. The cofactor is The D1/D2 heterodimer binds P680, chlorophylls that are the primary electron donor of PSII, and subsequent electron acceptors. It shares a non-heme iron and each subunit binds pheophytin, quinone, additional chlorophylls, carotenoids and lipids. D1 provides most of the ligands for the Mn4-Ca-O5 cluster of the oxygen-evolving complex (OEC). There is also a Cl(-1) ion associated with D1 and D2, which is required for oxygen evolution. The PSII complex binds additional chlorophylls, carotenoids and specific lipids.. Post-translationally, tyr-161 forms a radical intermediate that is referred to as redox-active TyrZ, YZ or Y-Z. In terms of processing, C-terminally processed by CTPA; processing is essential to allow assembly of the oxygen-evolving complex and thus photosynthetic growth.

It localises to the plastid. The protein localises to the chloroplast thylakoid membrane. It catalyses the reaction 2 a plastoquinone + 4 hnu + 2 H2O = 2 a plastoquinol + O2. Functionally, photosystem II (PSII) is a light-driven water:plastoquinone oxidoreductase that uses light energy to abstract electrons from H(2)O, generating O(2) and a proton gradient subsequently used for ATP formation. It consists of a core antenna complex that captures photons, and an electron transfer chain that converts photonic excitation into a charge separation. The D1/D2 (PsbA/PsbD) reaction center heterodimer binds P680, the primary electron donor of PSII as well as several subsequent electron acceptors. This chain is Photosystem II protein D1, found in Aethionema cordifolium (Lebanon stonecress).